A 361-amino-acid chain; its full sequence is Histidinol-phosphate aminotransferase (361 aa).

K220 is subject to N6-(pyridoxal phosphate)lysine.

The protein belongs to the class-II pyridoxal-phosphate-dependent aminotransferase family. Histidinol-phosphate aminotransferase subfamily. In terms of assembly, homodimer. The cofactor is pyridoxal 5'-phosphate.

It catalyses the reaction L-histidinol phosphate + 2-oxoglutarate = 3-(imidazol-4-yl)-2-oxopropyl phosphate + L-glutamate. It functions in the pathway amino-acid biosynthesis; L-histidine biosynthesis; L-histidine from 5-phospho-alpha-D-ribose 1-diphosphate: step 7/9. This is Histidinol-phosphate aminotransferase from Syntrophus aciditrophicus (strain SB).